A 445-amino-acid chain; its full sequence is Methylenetetrahydrofolate--tRNA-(uracil-5-)-methyltransferase TrmFO (445 aa).

9-14 (GGGLAG) is a binding site for FAD.

Belongs to the MnmG family. TrmFO subfamily. The cofactor is FAD.

It is found in the cytoplasm. It catalyses the reaction uridine(54) in tRNA + (6R)-5,10-methylene-5,6,7,8-tetrahydrofolate + NADH + H(+) = 5-methyluridine(54) in tRNA + (6S)-5,6,7,8-tetrahydrofolate + NAD(+). The enzyme catalyses uridine(54) in tRNA + (6R)-5,10-methylene-5,6,7,8-tetrahydrofolate + NADPH + H(+) = 5-methyluridine(54) in tRNA + (6S)-5,6,7,8-tetrahydrofolate + NADP(+). In terms of biological role, catalyzes the folate-dependent formation of 5-methyl-uridine at position 54 (M-5-U54) in all tRNAs. The chain is Methylenetetrahydrofolate--tRNA-(uracil-5-)-methyltransferase TrmFO from Rhizorhabdus wittichii (strain DSM 6014 / CCUG 31198 / JCM 15750 / NBRC 105917 / EY 4224 / RW1) (Sphingomonas wittichii).